Here is a 241-residue protein sequence, read N- to C-terminus: Thiamine import ATP-binding protein ThiQ (241 aa).

The ABC transporter domain occupies 7 to 235 (IRLSDVRFSY…AGPEALRHYI (229 aa)). 37–44 (GPSGSGKS) is a binding site for ATP.

Belongs to the ABC transporter superfamily. Thiamine importer (TC 3.A.1.19.1) family. As to quaternary structure, the complex is composed of two ATP-binding proteins (ThiQ), two transmembrane proteins (ThiP) and a solute-binding protein (ThiB).

It localises to the cell inner membrane. It catalyses the reaction thiamine(out) + ATP + H2O = thiamine(in) + ADP + phosphate + H(+). Part of the ABC transporter complex ThiBPQ involved in thiamine import. Responsible for energy coupling to the transport system. This is Thiamine import ATP-binding protein ThiQ from Brucella abortus biovar 1 (strain 9-941).